We begin with the raw amino-acid sequence, 208 residues long: Uracil phosphoribosyltransferase (208 aa).

5-phospho-alpha-D-ribose 1-diphosphate-binding positions include arginine 78, arginine 103, and 130–138 (DPMLATGGS). Uracil is bound by residues isoleucine 193 and 198-200 (GDA). Aspartate 199 is a 5-phospho-alpha-D-ribose 1-diphosphate binding site.

The protein belongs to the UPRTase family. The cofactor is Mg(2+).

The enzyme catalyses UMP + diphosphate = 5-phospho-alpha-D-ribose 1-diphosphate + uracil. Its pathway is pyrimidine metabolism; UMP biosynthesis via salvage pathway; UMP from uracil: step 1/1. With respect to regulation, allosterically activated by GTP. In terms of biological role, catalyzes the conversion of uracil and 5-phospho-alpha-D-ribose 1-diphosphate (PRPP) to UMP and diphosphate. The sequence is that of Uracil phosphoribosyltransferase from Photorhabdus laumondii subsp. laumondii (strain DSM 15139 / CIP 105565 / TT01) (Photorhabdus luminescens subsp. laumondii).